The primary structure comprises 67 residues: Phycobilisome 7.8 kDa linker polypeptide, allophycocyanin-associated, core (67 aa).

The CpcD-like domain maps to 1-56 (MRMFRITACVPSQTRIRTQRELQNTYFTKLVPYDNWFREQQRIMKMGGKIVKVELA).

This sequence belongs to the phycobilisome linker protein family.

Its subcellular location is the cellular thylakoid membrane. In terms of biological role, rod linker protein, associated with allophycocyanin. Linker polypeptides determine the state of aggregation and the location of the disk-shaped phycobiliprotein units within the phycobilisome and modulate their spectroscopic properties in order to mediate a directed and optimal energy transfer. The chain is Phycobilisome 7.8 kDa linker polypeptide, allophycocyanin-associated, core (apcC) from Synechocystis sp. (strain PCC 6714) (Aphanocapsa sp. (strain PCC 6714)).